The chain runs to 616 residues: Dihydroxy-acid dehydratase (616 aa).

Position 81 (D81) interacts with Mg(2+). C122 serves as a coordination point for [2Fe-2S] cluster. 2 residues coordinate Mg(2+): D123 and K124. At K124 the chain carries N6-carboxylysine. C195 serves as a coordination point for [2Fe-2S] cluster. Position 491 (E491) interacts with Mg(2+). The active-site Proton acceptor is the S517.

Belongs to the IlvD/Edd family. In terms of assembly, homodimer. [2Fe-2S] cluster is required as a cofactor. Requires Mg(2+) as cofactor.

It catalyses the reaction (2R)-2,3-dihydroxy-3-methylbutanoate = 3-methyl-2-oxobutanoate + H2O. The enzyme catalyses (2R,3R)-2,3-dihydroxy-3-methylpentanoate = (S)-3-methyl-2-oxopentanoate + H2O. It participates in amino-acid biosynthesis; L-isoleucine biosynthesis; L-isoleucine from 2-oxobutanoate: step 3/4. Its pathway is amino-acid biosynthesis; L-valine biosynthesis; L-valine from pyruvate: step 3/4. Functionally, functions in the biosynthesis of branched-chain amino acids. Catalyzes the dehydration of (2R,3R)-2,3-dihydroxy-3-methylpentanoate (2,3-dihydroxy-3-methylvalerate) into 2-oxo-3-methylpentanoate (2-oxo-3-methylvalerate) and of (2R)-2,3-dihydroxy-3-methylbutanoate (2,3-dihydroxyisovalerate) into 2-oxo-3-methylbutanoate (2-oxoisovalerate), the penultimate precursor to L-isoleucine and L-valine, respectively. This Yersinia pseudotuberculosis serotype O:1b (strain IP 31758) protein is Dihydroxy-acid dehydratase.